The following is a 177-amino-acid chain: Small ribosomal subunit protein uS4 (177 aa).

The 63-residue stretch at 104–166 (RRLQTIVYKK…PTSPFKQHPP (63 aa)) folds into the S4 RNA-binding domain. Positions 158 to 177 (TSPFKQHPPTQQGEENVQQA) are disordered. Residues 165–177 (PPTQQGEENVQQA) show a composition bias toward polar residues.

Belongs to the universal ribosomal protein uS4 family. In terms of assembly, part of the 30S ribosomal subunit. Contacts protein S5. The interaction surface between S4 and S5 is involved in control of translational fidelity.

Its function is as follows. One of the primary rRNA binding proteins, it binds directly to 16S rRNA where it nucleates assembly of the body of the 30S subunit. Functionally, with S5 and S12 plays an important role in translational accuracy. This is Small ribosomal subunit protein uS4 from Sulfurisphaera tokodaii (strain DSM 16993 / JCM 10545 / NBRC 100140 / 7) (Sulfolobus tokodaii).